The primary structure comprises 832 residues: Protein translocase subunit SecA (832 aa).

Residues Q87, 105–109 (GEGKT), and D512 each bind ATP.

It belongs to the SecA family. Monomer and homodimer. Part of the essential Sec protein translocation apparatus which comprises SecA, SecYEG and auxiliary proteins SecDF-YajC and YidC.

It localises to the cell membrane. Its subcellular location is the cytoplasm. It catalyses the reaction ATP + H2O + cellular proteinSide 1 = ADP + phosphate + cellular proteinSide 2.. Its function is as follows. Part of the Sec protein translocase complex. Interacts with the SecYEG preprotein conducting channel. Has a central role in coupling the hydrolysis of ATP to the transfer of proteins into and across the cell membrane, serving as an ATP-driven molecular motor driving the stepwise translocation of polypeptide chains across the membrane. The protein is Protein translocase subunit SecA of Wigglesworthia glossinidia brevipalpis.